A 123-amino-acid polypeptide reads, in one-letter code: UPF0295 protein Bcer98_0460 (123 aa).

The next 2 helical transmembrane spans lie at 12–32 and 43–63; these read IRTFALSLVFIGLLIAYLGVF and FMMLGFLAVLASTFVYFWIGM.

This sequence belongs to the UPF0295 family.

Its subcellular location is the cell membrane. The polypeptide is UPF0295 protein Bcer98_0460 (Bacillus cytotoxicus (strain DSM 22905 / CIP 110041 / 391-98 / NVH 391-98)).